A 195-amino-acid polypeptide reads, in one-letter code: Thymidine kinase (195 aa).

ATP is bound by residues 15-22 and 88-91; these read GSMFSGKS and DEVQ. The active-site Proton acceptor is the Glu-89. Zn(2+)-binding residues include Cys-145, Cys-148, Cys-183, and Xaa-186.

It belongs to the thymidine kinase family. Homotetramer.

It is found in the cytoplasm. The enzyme catalyses thymidine + ATP = dTMP + ADP + H(+). In Bacillus cereus (strain ATCC 10987 / NRS 248), this protein is Thymidine kinase.